The sequence spans 59 residues: MNFTRIIFFLFVVVFATASGKPWNIFKEIERAVARTRDAVISAGPAVRTVAAATSVASG.

The first 20 residues, 1-20 (MNFTRIIFFLFVVVFATASG), serve as a signal peptide directing secretion. Residue Lys21 is a propeptide. Ser58 is modified (serine amide).

It belongs to the cecropin family.

The protein resides in the secreted. Has antibacterial activity against Gram-positive and Gram-negative bacteria. The chain is Antibacterial peptide enbocin from Bombyx mori (Silk moth).